We begin with the raw amino-acid sequence, 175 residues long: Gamma-crystallin B (175 aa).

Beta/gamma crystallin 'Greek key' domains lie at 2–40 (GKITFFEDRGFQGRCYECSSDCPNLQTYFSRCNSVRVDS) and 41–83 (GCWM…RLIP). The tract at residues 84 to 88 (QHSGT) is connecting peptide. Beta/gamma crystallin 'Greek key' domains lie at 89–129 (YRMR…NVME) and 130–172 (GCWV…RRVM).

The protein belongs to the beta/gamma-crystallin family.

Crystallins are the dominant structural components of the vertebrate eye lens. The sequence is that of Gamma-crystallin B (Crygb) from Rattus norvegicus (Rat).